The primary structure comprises 721 residues: Phosphomethylpyrimidine synthase (721 aa).

Substrate is bound by residues Asn256, Met285, Tyr314, His350, 370–372 (SRG), 411–414 (DGMR), and Glu450. His454 is a binding site for Zn(2+). Residue Tyr477 participates in substrate binding. Residue His518 participates in Zn(2+) binding. 3 residues coordinate [4Fe-4S] cluster: Cys598, Cys601, and Cys606.

It belongs to the ThiC family. In terms of assembly, homodimer. Requires [4Fe-4S] cluster as cofactor.

It carries out the reaction 5-amino-1-(5-phospho-beta-D-ribosyl)imidazole + S-adenosyl-L-methionine = 4-amino-2-methyl-5-(phosphooxymethyl)pyrimidine + CO + 5'-deoxyadenosine + formate + L-methionine + 3 H(+). It participates in cofactor biosynthesis; thiamine diphosphate biosynthesis. Functionally, catalyzes the synthesis of the hydroxymethylpyrimidine phosphate (HMP-P) moiety of thiamine from aminoimidazole ribotide (AIR) in a radical S-adenosyl-L-methionine (SAM)-dependent reaction. The sequence is that of Phosphomethylpyrimidine synthase from Shewanella oneidensis (strain ATCC 700550 / JCM 31522 / CIP 106686 / LMG 19005 / NCIMB 14063 / MR-1).